A 238-amino-acid chain; its full sequence is 3-dehydroquinate dehydratase (238 aa).

3-dehydroquinate contacts are provided by residues 35–37 (ELR) and Arg-70. Residue His-133 is the Proton donor/acceptor of the active site. Catalysis depends on Lys-160, which acts as the Schiff-base intermediate with substrate. Positions 202 and 225 each coordinate 3-dehydroquinate.

This sequence belongs to the type-I 3-dehydroquinase family. Homodimer.

It catalyses the reaction 3-dehydroquinate = 3-dehydroshikimate + H2O. It functions in the pathway metabolic intermediate biosynthesis; chorismate biosynthesis; chorismate from D-erythrose 4-phosphate and phosphoenolpyruvate: step 3/7. In terms of biological role, involved in the third step of the chorismate pathway, which leads to the biosynthesis of aromatic amino acids. Catalyzes the cis-dehydration of 3-dehydroquinate (DHQ) and introduces the first double bond of the aromatic ring to yield 3-dehydroshikimate. In Staphylococcus aureus (strain bovine RF122 / ET3-1), this protein is 3-dehydroquinate dehydratase.